A 259-amino-acid chain; its full sequence is Thiazole synthase (259 aa).

The active-site Schiff-base intermediate with DXP is K99. 1-deoxy-D-xylulose 5-phosphate contacts are provided by residues G160, A187–G188, and N209–T210.

Belongs to the ThiG family. Homotetramer. Forms heterodimers with either ThiH or ThiS.

It localises to the cytoplasm. The catalysed reaction is [ThiS sulfur-carrier protein]-C-terminal-Gly-aminoethanethioate + 2-iminoacetate + 1-deoxy-D-xylulose 5-phosphate = [ThiS sulfur-carrier protein]-C-terminal Gly-Gly + 2-[(2R,5Z)-2-carboxy-4-methylthiazol-5(2H)-ylidene]ethyl phosphate + 2 H2O + H(+). Its pathway is cofactor biosynthesis; thiamine diphosphate biosynthesis. Functionally, catalyzes the rearrangement of 1-deoxy-D-xylulose 5-phosphate (DXP) to produce the thiazole phosphate moiety of thiamine. Sulfur is provided by the thiocarboxylate moiety of the carrier protein ThiS. In vitro, sulfur can be provided by H(2)S. This chain is Thiazole synthase, found in Solibacter usitatus (strain Ellin6076).